The chain runs to 577 residues: Arginine--tRNA ligase (577 aa).

Positions 123–133 (PNLAKEMHVGH) match the 'HIGH' region motif.

This sequence belongs to the class-I aminoacyl-tRNA synthetase family. In terms of assembly, monomer.

The protein resides in the cytoplasm. The enzyme catalyses tRNA(Arg) + L-arginine + ATP = L-arginyl-tRNA(Arg) + AMP + diphosphate. The chain is Arginine--tRNA ligase from Marinomonas sp. (strain MWYL1).